The primary structure comprises 382 residues: Succinate--CoA ligase [ADP-forming] subunit beta (382 aa).

The ATP-grasp domain maps to 9 to 240 (KELLKKYGLP…ITQIDPLEVE (232 aa)). Residues K46, E98, T101, and E106 each contribute to the ATP site. 2 residues coordinate Mg(2+): N195 and D209. Substrate is bound by residues N260 and 317–319 (GIL).

Belongs to the succinate/malate CoA ligase beta subunit family. In terms of assembly, heterotetramer of two alpha and two beta subunits. Mg(2+) is required as a cofactor.

It carries out the reaction succinate + ATP + CoA = succinyl-CoA + ADP + phosphate. The enzyme catalyses GTP + succinate + CoA = succinyl-CoA + GDP + phosphate. It participates in carbohydrate metabolism; tricarboxylic acid cycle; succinate from succinyl-CoA (ligase route): step 1/1. Functionally, succinyl-CoA synthetase functions in the citric acid cycle (TCA), coupling the hydrolysis of succinyl-CoA to the synthesis of either ATP or GTP and thus represents the only step of substrate-level phosphorylation in the TCA. The beta subunit provides nucleotide specificity of the enzyme and binds the substrate succinate, while the binding sites for coenzyme A and phosphate are found in the alpha subunit. The sequence is that of Succinate--CoA ligase [ADP-forming] subunit beta from Hydrogenobaculum sp. (strain Y04AAS1).